The primary structure comprises 276 residues: Phosphonates import ATP-binding protein PhnC (276 aa).

Residues 5 to 253 enclose the ABC transporter domain; sequence IRVERLNKTF…LLNDLYGADL (249 aa). 37 to 44 is an ATP binding site; it reads GASGSGKS.

It belongs to the ABC transporter superfamily. Phosphonates importer (TC 3.A.1.9.1) family. As to quaternary structure, the complex is composed of two ATP-binding proteins (PhnC), two transmembrane proteins (PhnE) and a solute-binding protein (PhnD).

The protein resides in the cell inner membrane. The catalysed reaction is phosphonate(out) + ATP + H2O = phosphonate(in) + ADP + phosphate + H(+). Its function is as follows. Part of the ABC transporter complex PhnCDE involved in phosphonates import. Responsible for energy coupling to the transport system. The polypeptide is Phosphonates import ATP-binding protein PhnC (Stutzerimonas stutzeri (Pseudomonas stutzeri)).